The chain runs to 512 residues: Probable amidase At4g34880 (512 aa).

Catalysis depends on charge relay system residues Lys-117 and Ser-198. Catalysis depends on Ser-222, which acts as the Acyl-ester intermediate.

It belongs to the amidase family. Expressed in vasculature of roots, cotyledons, leaves and sepals.

The catalysed reaction is a monocarboxylic acid amide + H2O = a monocarboxylate + NH4(+). In Arabidopsis thaliana (Mouse-ear cress), this protein is Probable amidase At4g34880.